Consider the following 561-residue polypeptide: Putative cuticle collagen 145 (561 aa).

Residues 1–30 (MEKILVTLSTGAASIAVLAVLFTIPSLYNT) form the signal peptide. Over residues 100 to 112 (TCPPGPPGPPGQP) the composition is skewed to pro residues. Disordered regions lie at residues 100–134 (TCPPGPPGPPGQPGQPGTPGAPGPKGEDNTSTYAP), 148–271 (PQGP…PGGP), 367–398 (TCPPGPPGPPGQPGQPGTPGAPGPKGEDNTAT), and 422–540 (TGPA…GPGL). Triple-helical region regions lie at residues 102 to 127 (PPGPPGPPGQPGQPGTPGAPGPKGED) and 153 to 276 (GPEG…LPGN). Low complexity-rich tracts occupy residues 164–209 (AGPD…PGQD) and 219–265 (APGA…DGQP). Residues 367–379 (TCPPGPPGPPGQP) show a composition bias toward pro residues. The interval 413 to 544 (KCPQGPAGPT…PGGPGLPGND (132 aa)) is triple-helical region. 2 stretches are compositionally biased toward low complexity: residues 422 to 467 (TGPA…PGQD) and 486 to 532 (APGA…DGQP). The region spanning 485–543 (GAPGAPGNAGPAGPAGQDGFPGQDGQPGPAGPAGQDGFPGNAGSDGQPGAPGGPGLPGN) is the Collagen-like domain.

The protein belongs to the cuticular collagen family. As to quaternary structure, collagen polypeptide chains are complexed within the cuticle by disulfide bonds and other types of covalent cross-links.

Its function is as follows. Nematode cuticles are composed largely of collagen-like proteins. The cuticle functions both as an exoskeleton and as a barrier to protect the worm from its environment. This is Putative cuticle collagen 145 from Caenorhabditis briggsae.